Here is a 122-residue protein sequence, read N- to C-terminus: Large ribosomal subunit protein uL14 (122 aa).

The protein belongs to the universal ribosomal protein uL14 family. Part of the 50S ribosomal subunit. Forms a cluster with proteins L3 and L19. In the 70S ribosome, L14 and L19 interact and together make contacts with the 16S rRNA in bridges B5 and B8.

Its function is as follows. Binds to 23S rRNA. Forms part of two intersubunit bridges in the 70S ribosome. The protein is Large ribosomal subunit protein uL14 of Flavobacterium johnsoniae (strain ATCC 17061 / DSM 2064 / JCM 8514 / BCRC 14874 / CCUG 350202 / NBRC 14942 / NCIMB 11054 / UW101) (Cytophaga johnsonae).